Reading from the N-terminus, the 105-residue chain is Nucleoid-associated protein Dred_0043 (105 aa).

It belongs to the YbaB/EbfC family. In terms of assembly, homodimer.

It localises to the cytoplasm. Its subcellular location is the nucleoid. In terms of biological role, binds to DNA and alters its conformation. May be involved in regulation of gene expression, nucleoid organization and DNA protection. This Desulforamulus reducens (strain ATCC BAA-1160 / DSM 100696 / MI-1) (Desulfotomaculum reducens) protein is Nucleoid-associated protein Dred_0043.